The chain runs to 87 residues: Phosphoribosyl-ATP pyrophosphatase (87 aa).

Belongs to the PRA-PH family.

The protein localises to the cytoplasm. The enzyme catalyses 1-(5-phospho-beta-D-ribosyl)-ATP + H2O = 1-(5-phospho-beta-D-ribosyl)-5'-AMP + diphosphate + H(+). The protein operates within amino-acid biosynthesis; L-histidine biosynthesis; L-histidine from 5-phospho-alpha-D-ribose 1-diphosphate: step 2/9. The polypeptide is Phosphoribosyl-ATP pyrophosphatase (Bifidobacterium animalis subsp. lactis (strain AD011)).